Consider the following 549-residue polypeptide: Carboxylesterase 1C (549 aa).

Residues 1-18 (MWLCALVWASLAVCPIWG) form the signal peptide. Asn-79 carries N-linked (GlcNAc...) asparagine glycosylation. Cys-87 and Cys-116 are oxidised to a cystine. Catalysis depends on Ser-221, which acts as the Acyl-ester intermediate. Residues Cys-273 and Cys-284 are joined by a disulfide bond. Residues Asn-274, Asn-275, and Asn-302 are each glycosylated (N-linked (GlcNAc...) asparagine). The active-site Charge relay system is Glu-340. An N-linked (GlcNAc...) asparagine glycan is attached at Asn-375. The Charge relay system role is filled by His-453. Ser-471 carries the phosphoserine modification. N-linked (GlcNAc...) asparagine glycosylation is present at Asn-476. The Prevents secretion from ER motif lies at 546-549 (TEHT).

It belongs to the type-B carboxylesterase/lipase family.

It localises to the endoplasmic reticulum lumen. The catalysed reaction is a carboxylic ester + H2O = an alcohol + a carboxylate + H(+). Involved in the detoxification of xenobiotics and in the activation of ester and amide prodrugs. Involved in the extracellular metabolism of lung surfactant. The chain is Carboxylesterase 1C (Ces1c) from Rattus norvegicus (Rat).